A 463-amino-acid chain; its full sequence is tRNA modification GTPase MnmE (463 aa).

The (6S)-5-formyl-5,6,7,8-tetrahydrofolate site is built by R27, E92, and K131. Residues G234 to S386 enclose the TrmE-type G domain. N244 is a K(+) binding site. Residues N244–S249, T263–T269, and D288–G291 each bind GTP. Position 248 (S248) interacts with Mg(2+). K(+)-binding residues include T263, V265, and T268. T269 provides a ligand contact to Mg(2+). A (6S)-5-formyl-5,6,7,8-tetrahydrofolate-binding site is contributed by K463.

The protein belongs to the TRAFAC class TrmE-Era-EngA-EngB-Septin-like GTPase superfamily. TrmE GTPase family. Homodimer. Heterotetramer of two MnmE and two MnmG subunits. K(+) is required as a cofactor.

Its subcellular location is the cytoplasm. Exhibits a very high intrinsic GTPase hydrolysis rate. Involved in the addition of a carboxymethylaminomethyl (cmnm) group at the wobble position (U34) of certain tRNAs, forming tRNA-cmnm(5)s(2)U34. The polypeptide is tRNA modification GTPase MnmE (Mycoplasmopsis synoviae (strain 53) (Mycoplasma synoviae)).